Reading from the N-terminus, the 227-residue chain is A-type potassium channel modulatory protein KCNIP1 (227 aa).

The EF-hand 1; degenerate domain occupies 38–94; that stretch reads LEMTMVCHRPEGLEQLEAQTNFTKRELQVLYRGFKNECPSGVVNEETFKQIYAQFFP. 3 EF-hand domains span residues 97–132, 133–168, and 181–216; these read DAST…LLRG, TVHE…IYDM, and TPRQ…DDNI. Residues aspartate 146, asparagine 148, aspartate 150, tyrosine 152, glutamate 157, aspartate 194, asparagine 196, aspartate 198, and glutamate 205 each coordinate Ca(2+). Positions 214-227 are interaction with KCND2; sequence DNIMRSLQLFQNVM.

The protein belongs to the recoverin family. As to quaternary structure, component of heteromultimeric potassium channels. Identified in potassium channel complexes containing KCND1, KCND2, KCND3, KCNIP1, KCNIP2, KCNIP3, KCNIP4, DPP6 and DPP10. Part of a heterooctamer composed of the tetrameric channel and four KCNIP1 chains. Probably part of a complex consisting of KCNIP1, KCNIP2 isoform 3 and KCND2. Self-associates to form homodimers and homotetramers. Interacts with KCNIP2 isoform 3 in a calcium-dependent manner. Interacts with KCND2; this interaction mediates the capture of both the N- and C-terminus of KCND2, thus preventing KCND2 N-type inactivation and modulates the channel gating kinetics. Interacts with KCND3; each KCNIP1 monomer interacts with two adjacent KCND3 subunits, through both the N-terminal inactivation ball of a KCND3 subunit and a C-terminal helix from the adjacent KCND3 subunit, clamping them together; this interaction stabilizes the tetrameric form and modulates the channel gating kinetics namely channel activation and inactivation kinetics and rate of recovery from inactivation. Expressed in brain. Found in a subpopulation of neurons widely distributed and enriched in Purkinje cells of the cerebellum and in the reticular thalamic and medial habenular nuclei.

It is found in the cell membrane. The protein localises to the cytoplasm. Its subcellular location is the cell projection. The protein resides in the dendrite. Regulatory subunit of Kv4/D (Shal)-type voltage-gated rapidly inactivating A-type potassium channels. Regulates channel density, inactivation kinetics and rate of recovery from inactivation in a calcium-dependent and isoform-specific manner. Modulates KCND2/Kv4.2 currents. In vitro, modulates KCND1/Kv4.1 currents. Increases the presence of KCND2 at the cell surface. In Mus musculus (Mouse), this protein is A-type potassium channel modulatory protein KCNIP1.